Here is a 312-residue protein sequence, read N- to C-terminus: Small kinetochore-associated protein (312 aa).

The disordered stretch occupies residues 1 to 171 (MAAPEAEAQE…PFNKQKPEEE (171 aa)). Over residues 131 to 143 (DVTKVTKSRRENG) the composition is skewed to basic and acidic residues. The interaction with SPAG5 stretch occupies residues 156–312 (LRNSYKPFNK…LEEMEQLLEM (157 aa)). Coiled-coil stretches lie at residues 166–210 (QKPE…LEKF) and 246–287 (LLET…QFLE).

Part of an astrin (SPAG5)-kinastrin (SKAP) complex containing KNSTRN, SPAG5, PLK1, DYNLL1 and SGO2A. Interacts with SPAG5. Directly binds to microtubules, although at relatively low affinity. Interacts with CENPE; this interaction greatly favors microtubule-binding. Interacts with DSN1/MIS13; leading to localization to kinetochores. Interacts with MAPRE1/EB1; leading to localization to the microtubule plus ends. Interacts with PRPF19. Interacts with DYNLL1. Interacts with MAP4.

Its subcellular location is the nucleus. It is found in the chromosome. It localises to the centromere. The protein localises to the kinetochore. The protein resides in the cytoplasm. Its subcellular location is the cytoskeleton. It is found in the spindle pole. It localises to the microtubule organizing center. Functionally, essential component of the mitotic spindle required for faithful chromosome segregation and progression into anaphase. Promotes the metaphase-to-anaphase transition and is required for chromosome alignment, normal timing of sister chromatid segregation, and maintenance of spindle pole architecture. The astrin (SPAG5)-kinastrin (SKAP) complex promotes stable microtubule-kinetochore attachments. Required for kinetochore oscillations and dynamics of microtubule plus-ends during live cell mitosis, possibly by forming a link between spindle microtubule plus-ends and mitotic chromosomes to achieve faithful cell division. The chain is Small kinetochore-associated protein (Knstrn) from Mus musculus (Mouse).